Here is a 150-residue protein sequence, read N- to C-terminus: MVRRRPATGAAQRPQLAAVGRGLLLASVLAAAASSLPVAESSCPRDNSLVRDISRMQQSNYGREGFSHITVTGALAHGTKEVEVWLQTFGPGQRTPIHRHSCEEVFIVLKGKGTLLLGSSSLKYPGQPQEVPVFQNTTFSIPVNDPHQVW.

A signal peptide spans Met1–Ser41. Residues His98, His100, and Glu104 each contribute to the Zn(2+) site. Residue Asn136 is glycosylated (N-linked (GlcNAc...) asparagine). Residue His147 coordinates Zn(2+).

As to quaternary structure, homodimer.

It is found in the endoplasmic reticulum lumen. In terms of biological role, this is probably a receptor for the plant hormone auxin. This is Auxin-binding protein 5 (ABP5) from Zea mays (Maize).